Consider the following 152-residue polypeptide: UPF0178 protein YPTS_2857 (152 aa).

The protein belongs to the UPF0178 family.

The polypeptide is UPF0178 protein YPTS_2857 (Yersinia pseudotuberculosis serotype IB (strain PB1/+)).